The primary structure comprises 29 residues: U20-ctenitoxin-Co1a (29 aa).

2 disulfides stabilise this stretch: C3/C16 and C10/C21.

Expressed by the venom gland.

It is found in the secreted. The sequence is that of U20-ctenitoxin-Co1a from Ctenus ornatus (Brazilian spider).